The chain runs to 527 residues: Type-2 serine--tRNA ligase (527 aa).

Alanine 317 contributes to the L-serine binding site. Cysteine 319 is a binding site for Zn(2+). Residue arginine 349 coordinates L-serine. ATP-binding positions include 349–351 (RWE) and 360–361 (RV). Residue 366–368 (RIE) coordinates L-serine. Residues glutamate 368 and cysteine 478 each contribute to the Zn(2+) site. Position 485 (arginine 485) interacts with ATP.

The protein belongs to the class-II aminoacyl-tRNA synthetase family. Type-2 seryl-tRNA synthetase subfamily. In terms of assembly, homodimer. Requires Zn(2+) as cofactor.

The protein resides in the cytoplasm. It carries out the reaction tRNA(Ser) + L-serine + ATP = L-seryl-tRNA(Ser) + AMP + diphosphate + H(+). It catalyses the reaction tRNA(Sec) + L-serine + ATP = L-seryl-tRNA(Sec) + AMP + diphosphate + H(+). The protein operates within aminoacyl-tRNA biosynthesis; selenocysteinyl-tRNA(Sec) biosynthesis; L-seryl-tRNA(Sec) from L-serine and tRNA(Sec): step 1/1. Functionally, catalyzes the attachment of serine to tRNA(Ser). Is also able to aminoacylate tRNA(Sec) with serine, to form the misacylated tRNA L-seryl-tRNA(Sec), which will be further converted into selenocysteinyl-tRNA(Sec). The protein is Type-2 serine--tRNA ligase of Methanopyrus kandleri (strain AV19 / DSM 6324 / JCM 9639 / NBRC 100938).